A 156-amino-acid chain; its full sequence is ATP synthase subunit b (156 aa).

A helical transmembrane segment spans residues 3–23 (ITFTIFAQSIAFAALIWIVAT).

Belongs to the ATPase B chain family. F-type ATPases have 2 components, F(1) - the catalytic core - and F(0) - the membrane proton channel. F(1) has five subunits: alpha(3), beta(3), gamma(1), delta(1), epsilon(1). F(0) has three main subunits: a(1), b(2) and c(10-14). The alpha and beta chains form an alternating ring which encloses part of the gamma chain. F(1) is attached to F(0) by a central stalk formed by the gamma and epsilon chains, while a peripheral stalk is formed by the delta and b chains.

It is found in the cell inner membrane. In terms of biological role, f(1)F(0) ATP synthase produces ATP from ADP in the presence of a proton or sodium gradient. F-type ATPases consist of two structural domains, F(1) containing the extramembraneous catalytic core and F(0) containing the membrane proton channel, linked together by a central stalk and a peripheral stalk. During catalysis, ATP synthesis in the catalytic domain of F(1) is coupled via a rotary mechanism of the central stalk subunits to proton translocation. Its function is as follows. Component of the F(0) channel, it forms part of the peripheral stalk, linking F(1) to F(0). The chain is ATP synthase subunit b from Xylella fastidiosa (strain M12).